We begin with the raw amino-acid sequence, 438 residues long: Neutral metalloprotease ShpI (438 aa).

A signal peptide spans 1 to 26 (MINKKKLVTSLVTSSLLATFTLGSFA). Positions 27 to 101 (DAHTYIINNE…KSENALSNSK (75 aa)) are excised as a propeptide. H242 provides a ligand contact to Zn(2+). E243 is an active-site residue. 2 residues coordinate Zn(2+): H246 and E269.

The protein belongs to the peptidase M30 family. It depends on Zn(2+) as a cofactor. In terms of processing, several different N-terminal ends may be produced, the favored N-terminus is position 102.

The protein localises to the secreted. With respect to regulation, inhibited by metal- and zinc-specific inhibitors, such as EDTA and 1,10-phenanthroline in vitro. Is resistant to all inhibitors of serine, cysteine and aspartic proteases. Functionally, protease that has a low substrate specificity. Catalyzes the hydrolysis of glucagon, melittin and oxidized beta-insulin at various positions in vitro. Is not able to cleave elastin or the synthetic substrates FAGLA (a substrate for neutral proteinases) and FALGPA (a substrate for collagenase). This Staphylococcus hyicus protein is Neutral metalloprotease ShpI.